A 428-amino-acid chain; its full sequence is Serine--tRNA ligase (428 aa).

235 to 237 (TAE) serves as a coordination point for L-serine. 266-268 (RYE) is a binding site for ATP. Glu289 contributes to the L-serine binding site. 353 to 356 (EVSS) contacts ATP. Ser389 contacts L-serine.

Belongs to the class-II aminoacyl-tRNA synthetase family. Type-1 seryl-tRNA synthetase subfamily. Homodimer. The tRNA molecule binds across the dimer.

It localises to the cytoplasm. The enzyme catalyses tRNA(Ser) + L-serine + ATP = L-seryl-tRNA(Ser) + AMP + diphosphate + H(+). It carries out the reaction tRNA(Sec) + L-serine + ATP = L-seryl-tRNA(Sec) + AMP + diphosphate + H(+). The protein operates within aminoacyl-tRNA biosynthesis; selenocysteinyl-tRNA(Sec) biosynthesis; L-seryl-tRNA(Sec) from L-serine and tRNA(Sec): step 1/1. Functionally, catalyzes the attachment of serine to tRNA(Ser). Is also able to aminoacylate tRNA(Sec) with serine, to form the misacylated tRNA L-seryl-tRNA(Sec), which will be further converted into selenocysteinyl-tRNA(Sec). The sequence is that of Serine--tRNA ligase from Blochmanniella pennsylvanica (strain BPEN).